We begin with the raw amino-acid sequence, 284 residues long: RNase adapter protein RapZ (284 aa).

Position 8-15 (8-15 (GRSGSGKS)) interacts with ATP. A GTP-binding site is contributed by 56-59 (DVRN). Residues 266 to 284 (RSRGKNVQSRHRTLEKRKQ) are RNA-binding.

Belongs to the RapZ-like family. RapZ subfamily. Homotrimer.

Its function is as follows. Modulates the synthesis of GlmS, by affecting the processing and stability of the regulatory small RNA GlmZ. When glucosamine-6-phosphate (GlcN6P) concentrations are high in the cell, RapZ binds GlmZ and targets it to cleavage by RNase E. Consequently, GlmZ is inactivated and unable to activate GlmS synthesis. Under low GlcN6P concentrations, RapZ is sequestered and inactivated by an other regulatory small RNA, GlmY, preventing GlmZ degradation and leading to synthesis of GlmS. The polypeptide is RNase adapter protein RapZ (Serratia proteamaculans (strain 568)).